A 310-amino-acid polypeptide reads, in one-letter code: Putative S-adenosyl-L-methionine-dependent methyltransferase ML2640 (310 aa).

S-adenosyl-L-methionine-binding positions include aspartate 132 and aspartate 161–leucine 162.

It belongs to the UPF0677 family.

Exhibits S-adenosyl-L-methionine-dependent methyltransferase activity. In Mycobacterium leprae (strain TN), this protein is Putative S-adenosyl-L-methionine-dependent methyltransferase ML2640.